Consider the following 333-residue polypeptide: Phospholipid phosphatase-related protein type 1 (333 aa).

3 helical membrane-spanning segments follow: residues 12 to 32, 66 to 86, and 126 to 146; these read IIPC…LLAY, FIQP…IIFV, and FIGV…AGQV. The N-linked (GlcNAc...) asparagine glycan is linked to N162. The next 3 membrane-spanning stretches (helical) occupy residues 200–217, 223–243, and 256–276; these read ASLS…ITST, SRLA…LTGL, and VVAG…CVVN.

The protein belongs to the PA-phosphatase related phosphoesterase family.

It localises to the cell membrane. It is found in the cell projection. Its subcellular location is the neuron projection. Its function is as follows. May play a role in neurite outgrowth and neurogenesis. The protein is Phospholipid phosphatase-related protein type 1 (plppr1) of Danio rerio (Zebrafish).